Consider the following 692-residue polypeptide: DNA topoisomerase 4 subunit B (692 aa).

ATP is bound by residues Tyr53, Asn93, Asp120, Gly162–Ile168, and Lys393. The region spanning Ala473–Pro587 is the Toprim domain. Positions 479, 552, and 554 each coordinate Mg(2+).

This sequence belongs to the type II topoisomerase family. ParE type 1 subfamily. As to quaternary structure, heterotetramer composed of ParC and ParE. The cofactor is Mg(2+). It depends on Mn(2+) as a cofactor. Requires Ca(2+) as cofactor.

It carries out the reaction ATP-dependent breakage, passage and rejoining of double-stranded DNA.. Topoisomerase IV is essential for chromosome segregation. It relaxes supercoiled DNA. Performs the decatenation events required during the replication of a circular DNA molecule. In Bartonella bacilliformis (strain ATCC 35685 / KC583 / Herrer 020/F12,63), this protein is DNA topoisomerase 4 subunit B.